Consider the following 79-residue polypeptide: Putative antitoxin VapB12 (79 aa).

It belongs to the UPF0330 family.

Functionally, possibly the antitoxin component of a type II toxin-antitoxin (TA) system. Its cognate toxin is VapC12 (Potential). This Sulfurisphaera tokodaii (strain DSM 16993 / JCM 10545 / NBRC 100140 / 7) (Sulfolobus tokodaii) protein is Putative antitoxin VapB12 (vapB12).